A 187-amino-acid polypeptide reads, in one-letter code: Ribosome-recycling factor (187 aa).

The protein belongs to the RRF family.

The protein resides in the cytoplasm. Functionally, responsible for the release of ribosomes from messenger RNA at the termination of protein biosynthesis. May increase the efficiency of translation by recycling ribosomes from one round of translation to another. The sequence is that of Ribosome-recycling factor from Lactiplantibacillus plantarum (strain ATCC BAA-793 / NCIMB 8826 / WCFS1) (Lactobacillus plantarum).